The primary structure comprises 152 residues: Xanthine-guanine phosphoribosyltransferase (152 aa).

5-phospho-alpha-D-ribose 1-diphosphate-binding positions include 37–38 (RG), R69, and 88–96 (DDLVDTGGT). A GMP-binding site is contributed by R69. D89 is a binding site for Mg(2+). Positions 92 and 135 each coordinate guanine. D92 and I135 together coordinate xanthine. GMP is bound by residues 92–96 (DTGGT) and 134–135 (WI).

Belongs to the purine/pyrimidine phosphoribosyltransferase family. XGPT subfamily. As to quaternary structure, homotetramer. It depends on Mg(2+) as a cofactor.

It is found in the cell inner membrane. The catalysed reaction is GMP + diphosphate = guanine + 5-phospho-alpha-D-ribose 1-diphosphate. It catalyses the reaction XMP + diphosphate = xanthine + 5-phospho-alpha-D-ribose 1-diphosphate. It carries out the reaction IMP + diphosphate = hypoxanthine + 5-phospho-alpha-D-ribose 1-diphosphate. It functions in the pathway purine metabolism; GMP biosynthesis via salvage pathway; GMP from guanine: step 1/1. It participates in purine metabolism; XMP biosynthesis via salvage pathway; XMP from xanthine: step 1/1. Functionally, purine salvage pathway enzyme that catalyzes the transfer of the ribosyl-5-phosphate group from 5-phospho-alpha-D-ribose 1-diphosphate (PRPP) to the N9 position of the 6-oxopurines guanine and xanthine to form the corresponding ribonucleotides GMP (guanosine 5'-monophosphate) and XMP (xanthosine 5'-monophosphate), with the release of PPi. To a lesser extent, also acts on hypoxanthine. This chain is Xanthine-guanine phosphoribosyltransferase, found in Shigella boydii serotype 18 (strain CDC 3083-94 / BS512).